A 285-amino-acid polypeptide reads, in one-letter code: 1,4-dihydroxy-2-naphthoyl-CoA synthase (285 aa).

Substrate-binding positions include arginine 45, 84 to 88 (SGGDQ), tyrosine 97, 129 to 133 (YAIGG), threonine 155, serine 161, tyrosine 258, and lysine 273. 154–156 (QTG) is a hydrogencarbonate binding site.

Belongs to the enoyl-CoA hydratase/isomerase family. MenB subfamily. Hydrogencarbonate serves as cofactor.

The enzyme catalyses 2-succinylbenzoyl-CoA + H(+) = 1,4-dihydroxy-2-naphthoyl-CoA + H2O. It participates in quinol/quinone metabolism; 1,4-dihydroxy-2-naphthoate biosynthesis; 1,4-dihydroxy-2-naphthoate from chorismate: step 6/7. It functions in the pathway quinol/quinone metabolism; menaquinone biosynthesis. Functionally, converts o-succinylbenzoyl-CoA (OSB-CoA) to 1,4-dihydroxy-2-naphthoyl-CoA (DHNA-CoA). The sequence is that of 1,4-dihydroxy-2-naphthoyl-CoA synthase from Haemophilus influenzae (strain ATCC 51907 / DSM 11121 / KW20 / Rd).